We begin with the raw amino-acid sequence, 134 residues long: uncharacterized protein (134 aa).

The protein to E.coli YbcV and YdfO.

This is an uncharacterized protein from Escherichia coli (strain K12).